Consider the following 284-residue polypeptide: Bifunctional protein FolD (284 aa).

Residues 163–165 (GRS) and Ser188 contribute to the NADP(+) site.

This sequence belongs to the tetrahydrofolate dehydrogenase/cyclohydrolase family. In terms of assembly, homodimer.

The enzyme catalyses (6R)-5,10-methylene-5,6,7,8-tetrahydrofolate + NADP(+) = (6R)-5,10-methenyltetrahydrofolate + NADPH. The catalysed reaction is (6R)-5,10-methenyltetrahydrofolate + H2O = (6R)-10-formyltetrahydrofolate + H(+). Its pathway is one-carbon metabolism; tetrahydrofolate interconversion. In terms of biological role, catalyzes the oxidation of 5,10-methylenetetrahydrofolate to 5,10-methenyltetrahydrofolate and then the hydrolysis of 5,10-methenyltetrahydrofolate to 10-formyltetrahydrofolate. This chain is Bifunctional protein FolD, found in Lactococcus lactis subsp. lactis (strain IL1403) (Streptococcus lactis).